The chain runs to 108 residues: CDGSH iron-sulfur domain-containing protein 1 (108 aa).

A helical; Signal-anchor for type III membrane protein membrane pass occupies residues 14 to 31 (IAAVTFAAGTAALGYLAY). Over 32-108 (KKFYAKENRT…GPLIIKKKET (77 aa)) the chain is Cytoplasmic. Lys-42 is covalently cross-linked (Glycyl lysine isopeptide (Lys-Gly) (interchain with G-Cter in ubiquitin)). Lys-55 acts as the Schiff-base intermediate with pyridoxal 5'-phosphate in catalysis. Lys-55 and Lys-68 each carry N6-acetyllysine; alternate. Glycyl lysine isopeptide (Lys-Gly) (interchain with G-Cter in ubiquitin); alternate cross-links involve residues Lys-55 and Lys-68. Residues Cys-72 and Cys-74 each coordinate [2Fe-2S] cluster. Glycyl lysine isopeptide (Lys-Gly) (interchain with G-Cter in ubiquitin) cross-links involve residues Lys-78 and Lys-79. The [2Fe-2S] cluster site is built by Cys-83 and His-87. A Glycyl lysine isopeptide (Lys-Gly) (interchain with G-Cter in ubiquitin) cross-link involves residue Lys-89. Lys-104 is subject to N6-acetyllysine; alternate. A Glycyl lysine isopeptide (Lys-Gly) (interchain with G-Cter in ubiquitin); alternate cross-link involves residue Lys-104. Residues Lys-105 and Lys-106 each participate in a glycyl lysine isopeptide (Lys-Gly) (interchain with G-Cter in ubiquitin) cross-link.

The protein belongs to the CISD protein family. In terms of assembly, homodimer. [2Fe-2S] cluster is required as a cofactor. Pyridoxal 5'-phosphate serves as cofactor. In terms of processing, ubiquitinated by PRKN during mitophagy, leading to its degradation and enhancement of mitophagy. Deubiquitinated by USP30. As to expression, liver, adipose, skeletal muscle and heart (at protein level). Widely expressed. Expressed at the highest levels in the heart.

The protein localises to the mitochondrion outer membrane. It carries out the reaction L-cysteine + 2-oxoglutarate = 2-oxo-3-sulfanylpropanoate + L-glutamate. L-cysteine transaminase that catalyzes the reversible transfer of the amino group from L-cysteine to the alpha-keto acid 2-oxoglutarate to respectively form 2-oxo-3-sulfanylpropanoate and L-glutamate. The catalytic cycle occurs in the presence of pyridoxal 5'-phosphate (PLP) cofactor that facilitates transamination by initially forming an internal aldimine with the epsilon-amino group of active site Lys-55 residue on the enzyme (PLP-enzyme aldimine), subsequently displaced by formation of an external aldimine with the substrate amino group (PLP-L-cysteine aldimine). The external aldimine is further deprotonated to form a carbanion intermediate, which in the presence of 2-oxoglutarate regenerates PLP yielding final products 2-oxo-3-sulfanylpropanoate and L-glutamate. The proton transfer in carbanion intermediate is suggested to be controlled by the active site lysine residue, whereas PLP stabilizes carbanion structure through electron delocalization, also known as the electron sink effect. Plays a key role in regulating maximal capacity for electron transport and oxidative phosphorylation. May be involved in iron-sulfur cluster shuttling and/or in redox reactions. Can transfer the [2Fe-2S] cluster to an apo-acceptor protein only when in the oxidation state, likely serving as a redox sensor that regulates mitochondrial iron-sulfur cluster assembly and iron trafficking upon oxidative stress. This chain is CDGSH iron-sulfur domain-containing protein 1 (Cisd1), found in Mus musculus (Mouse).